Reading from the N-terminus, the 379-residue chain is Homoserine O-succinyltransferase (379 aa).

The AB hydrolase-1 domain maps to 51–360 (NAVLICHALS…DSPYGHDAFL (310 aa)). Ser-157 functions as the Nucleophile in the catalytic mechanism. Residue Arg-227 participates in substrate binding. Catalysis depends on residues Asp-323 and His-356. Asp-357 serves as a coordination point for substrate.

Belongs to the AB hydrolase superfamily. MetX family. In terms of assembly, homodimer.

Its subcellular location is the cytoplasm. The enzyme catalyses L-homoserine + succinyl-CoA = O-succinyl-L-homoserine + CoA. It functions in the pathway amino-acid biosynthesis; L-methionine biosynthesis via de novo pathway; O-succinyl-L-homoserine from L-homoserine: step 1/1. Transfers a succinyl group from succinyl-CoA to L-homoserine, forming succinyl-L-homoserine. This chain is Homoserine O-succinyltransferase, found in Pseudomonas putida (strain ATCC 700007 / DSM 6899 / JCM 31910 / BCRC 17059 / LMG 24140 / F1).